Reading from the N-terminus, the 343-residue chain is Aspartate beta-hydroxylase domain-containing protein 2 (343 aa).

At 1–31 the chain is on the cytoplasmic side; that stretch reads MWLEWLVAWSWSLDGLRDCIATGIQSVRDCD. Residues 32–52 form a helical membrane-spanning segment; sequence GTAVITVACLLILFVWYCYHV. Residues 53–343 lie on the Lumenal side of the membrane; that stretch reads GREQPRPHVS…ALDFIFAPGR (291 aa). N-linked (GlcNAc...) asparagine glycosylation is found at Asn-77 and Asn-185. Trp-202 and Ser-246 together coordinate 2-oxoglutarate. His-257 contacts Fe cation. 266-268 provides a ligand contact to 2-oxoglutarate; sequence RCH. Residue His-302 coordinates Fe cation. Arg-315 is a 2-oxoglutarate binding site.

The protein belongs to the aspartyl/asparaginyl beta-hydroxylase family. Requires Fe cation as cofactor.

It localises to the membrane. May function as 2-oxoglutarate-dependent dioxygenase. In Mus musculus (Mouse), this protein is Aspartate beta-hydroxylase domain-containing protein 2 (Asphd2).